We begin with the raw amino-acid sequence, 304 residues long: MSKKLTFQEIILTLQQFWNDQGCMLMQAYDNEKGAGTMSPYTFLRAIGPEPWNAAYVEPSRRPADGRYGENPNRLYQHHQFQVVMKPSPSNIQELYLKSLELLGINPLEHDIRFVEDNWENPSTGSAGLGWEVWLDGMEITQFTYFQQVGGLQTGPVTSEVTYGLERLASYIQEVDSVYDIEWAPGVKYGEIFTQPEYEHSKYSFEISDQVMLLENFEKFEREAKRALEEGLVHPAYDYVLKCSHTFNLLDARGAVSVTERAGYIARIRNLARVVAKTFVAERKKLGFPLLDEETRIKLLAEED.

The protein belongs to the class-II aminoacyl-tRNA synthetase family. Tetramer of two alpha and two beta subunits.

It localises to the cytoplasm. The enzyme catalyses tRNA(Gly) + glycine + ATP = glycyl-tRNA(Gly) + AMP + diphosphate. This chain is Glycine--tRNA ligase alpha subunit, found in Streptococcus agalactiae serotype Ia (strain ATCC 27591 / A909 / CDC SS700).